The sequence spans 431 residues: Beta-1,4-glucuronyltransferase 1 (431 aa).

At 1 to 11 (MHFSKKCSVFK) the chain is on the cytoplasmic side. Residues 12-32 (VVLSALLIVALLQLLYLSFLS) traverse the membrane as a helical segment. The Lumenal portion of the chain corresponds to 33–431 (KLHGKQQRYK…AKYPTSPRRC (399 aa)). Asn-216 is a glycosylation site (N-linked (GlcNAc...) asparagine). Mn(2+)-binding residues include Asp-241 and Asp-243. An N-linked (GlcNAc...) asparagine glycan is attached at Asn-314.

This sequence belongs to the glycosyltransferase 49 family. Mn(2+) is required as a cofactor.

The protein localises to the golgi apparatus membrane. It catalyses the reaction 3-O-[beta-D-Xyl-(1-&gt;4)-Rib-ol-P-Rib-ol-P-3-beta-D-GalNAc-(1-&gt;3)-beta-D-GlcNAc-(1-&gt;4)-(O-6-P-alpha-D-Man)]-Thr-[protein] + UDP-alpha-D-glucuronate = 3-O-[beta-D-GlcA-(1-&gt;3)-beta-D-Xyl-(1-&gt;4)-Rib-ol-P-Rib-ol-P-3-beta-D-GalNAc-(1-&gt;3)-beta-D-GlcNAc-(1-&gt;4)-(O-6-P-alpha-D-Man)]-Thr-[protein] + UDP + H(+). It functions in the pathway protein modification; protein glycosylation. Its function is as follows. Beta-1,4-glucuronyltransferase involved in O-mannosylation of alpha-dystroglycan (DAG1). Transfers a glucuronic acid (GlcA) residue onto a xylose (Xyl) acceptor to produce the glucuronyl-beta-1,4-xylose-beta disaccharide primer, which is further elongated by LARGE, during synthesis of phosphorylated O-mannosyl glycan. Phosphorylated O-mannosyl glycan is a carbohydrate structure present in alpha-dystroglycan (DAG1), which is required for binding laminin G-like domain-containing extracellular proteins with high affinity. Required for axon guidance; via its function in O-mannosylation of alpha-dystroglycan (DAG1). The protein is Beta-1,4-glucuronyltransferase 1 of Danio rerio (Zebrafish).